The sequence spans 344 residues: tRNA N6-adenosine threonylcarbamoyltransferase (344 aa).

Histidine 112 and histidine 116 together coordinate Fe cation. Substrate contacts are provided by residues 135–139, aspartate 168, glycine 181, and asparagine 271; that span reads LVSGG. Position 299 (aspartate 299) interacts with Fe cation.

It belongs to the KAE1 / TsaD family. It depends on Fe(2+) as a cofactor.

It is found in the cytoplasm. It carries out the reaction L-threonylcarbamoyladenylate + adenosine(37) in tRNA = N(6)-L-threonylcarbamoyladenosine(37) in tRNA + AMP + H(+). Required for the formation of a threonylcarbamoyl group on adenosine at position 37 (t(6)A37) in tRNAs that read codons beginning with adenine. Is involved in the transfer of the threonylcarbamoyl moiety of threonylcarbamoyl-AMP (TC-AMP) to the N6 group of A37, together with TsaE and TsaB. TsaD likely plays a direct catalytic role in this reaction. This is tRNA N6-adenosine threonylcarbamoyltransferase from Sphingopyxis alaskensis (strain DSM 13593 / LMG 18877 / RB2256) (Sphingomonas alaskensis).